Reading from the N-terminus, the 347-residue chain is NADH-ubiquinone oxidoreductase chain 2 (347 aa).

Transmembrane regions (helical) follow at residues 3 to 23 (PPIL…VMTS), 25 to 45 (HWML…PILM), 59 to 79 (YFLT…INLL), 96 to 116 (ILMT…FWVP), 122 to 142 (ISLS…LSVL), 149 to 169 (INPN…GWGG), 178 to 198 (IMAY…LYNP), 201 to 221 (MFLN…LFMI), 237 to 257 (APLI…LPPL), 274 to 294 (EMII…YFYM), and 323 to 343 (MIFL…TPMI).

Belongs to the complex I subunit 2 family. In terms of assembly, core subunit of respiratory chain NADH dehydrogenase (Complex I) which is composed of 45 different subunits. Interacts with TMEM242.

Its subcellular location is the mitochondrion inner membrane. It carries out the reaction a ubiquinone + NADH + 5 H(+)(in) = a ubiquinol + NAD(+) + 4 H(+)(out). Its function is as follows. Core subunit of the mitochondrial membrane respiratory chain NADH dehydrogenase (Complex I) which catalyzes electron transfer from NADH through the respiratory chain, using ubiquinone as an electron acceptor. Essential for the catalytic activity and assembly of complex I. The sequence is that of NADH-ubiquinone oxidoreductase chain 2 from Civettictis civetta (African civet).